The following is a 244-amino-acid chain: tRNA (guanine-N(7)-)-methyltransferase (244 aa).

Positions 1–20 (MTNPFDSAGSKAPPKPFTVS) are disordered. Positions 75, 100, 127, and 150 each coordinate S-adenosyl-L-methionine. Asp150 is a catalytic residue. Lys154 lines the substrate pocket. An interaction with RNA region spans residues 156–161 (RHNKRR). Residues Asp186 and 223–226 (THFE) contribute to the substrate site.

This sequence belongs to the class I-like SAM-binding methyltransferase superfamily. TrmB family.

The catalysed reaction is guanosine(46) in tRNA + S-adenosyl-L-methionine = N(7)-methylguanosine(46) in tRNA + S-adenosyl-L-homocysteine. It functions in the pathway tRNA modification; N(7)-methylguanine-tRNA biosynthesis. Catalyzes the formation of N(7)-methylguanine at position 46 (m7G46) in tRNA. This chain is tRNA (guanine-N(7)-)-methyltransferase, found in Stenotrophomonas maltophilia (strain K279a).